Reading from the N-terminus, the 68-residue chain is MRTQLAVLLVALVLLQMIAQSEALWGEIWNTVKGLIGKRGLRNLDDLDDVFDDDLSAADLEFLKQLMR.

Residues 1 to 23 (MRTQLAVLLVALVLLQMIAQSEA) form the signal peptide. At Ile-36 the chain carries Isoleucine amide. The propeptide occupies 37-68 (GKRGLRNLDDLDDVFDDDLSAADLEFLKQLMR).

Belongs to the non-disulfide-bridged peptide (NDBP) superfamily. Short antimicrobial peptide (group 4) family. In terms of tissue distribution, expressed by the venom gland.

The protein localises to the secreted. Its function is as follows. Probable antimicrobial peptide. Shows dose-dependent and time-dependent inactivation of herpes simplex virus type 1 (HSV-1) and dose-dependent inhibition of HSV-1 viral attachment to host cells. Scarcely suppress an established HSV-1 infection due to poor cellular uptake. In Euscorpiops validus (Scorpion), this protein is Antimicrobial peptide Eval418.